A 401-amino-acid chain; its full sequence is tRNA(Met) cytidine acetate ligase (401 aa).

Residues 7 to 20 (IVEYNPFHNGHLYH), Gly102, Asn164, and Arg189 each bind ATP.

It belongs to the TmcAL family.

The protein resides in the cytoplasm. It carries out the reaction cytidine(34) in elongator tRNA(Met) + acetate + ATP = N(4)-acetylcytidine(34) in elongator tRNA(Met) + AMP + diphosphate. In terms of biological role, catalyzes the formation of N(4)-acetylcytidine (ac(4)C) at the wobble position of elongator tRNA(Met), using acetate and ATP as substrates. First activates an acetate ion to form acetyladenylate (Ac-AMP) and then transfers the acetyl group to tRNA to form ac(4)C34. In Thermoanaerobacter pseudethanolicus (strain ATCC 33223 / 39E) (Clostridium thermohydrosulfuricum), this protein is tRNA(Met) cytidine acetate ligase.